Reading from the N-terminus, the 315-residue chain is MPGLSCRFYQHKFPEVEDVVMVNVRSIAEMGAYVSLLEYNNIEGMILLSELSRRRIRSINKLIRIGRNERVVVIRVDKEKGYIDLSKRRVSPEEAIKCEDKFTKSKTVYSILRHVAEVLEYTKDEQLESLFQRTAWVFDDKYKRPGYGAYDAFKHAVSDPSILDSLDLNEDEREVLINNINRRLTPQAVKIRADIEVACYGYEGIDAVKEALRAGLNCSTENMPIKINLIAPPRYVMTTTTLERTEGLSVLSQAMAVIKEKIEEKRGVFNVQMEPKVVTDTDETELARQMERLERENAEVDGDDDAEEMEAKAED.

Residues 17-88 enclose the S1 motif domain; it reads EDVVMVNVRS…EKGYIDLSKR (72 aa). A Phosphoserine; by HRI modification is found at serine 49. Serine 52 is modified (phosphoserine). An N6-acetyllysine modification is found at lysine 141. Serine 158 carries the post-translational modification Phosphoserine. Residues threonine 279 and threonine 281 each carry the phosphothreonine modification. Residues 293-315 form a disordered region; sequence LERENAEVDGDDDAEEMEAKAED. Over residues 299–308 the composition is skewed to acidic residues; the sequence is EVDGDDDAEE.

This sequence belongs to the eIF-2-alpha family. In terms of assembly, eukaryotic translation initiation factor 2 eIF2 is a heterotrimeric complex composed of an alpha (EIF2S1), a beta (EIF2S2) and a gamma (EIF2S3) chain. eIF2 is member of the 43S pre-initiation complex (43S PIC). eIF2 forms a complex with at least CELF1/CUGBP1, CALR, CALR3, EIF2S1, EIF2S2, HSP90B1 and HSPA5. Interaction with METAP2 protects EIF2S1 from inhibitory phosphorylation. Interacts with ABCF1. Associates with ribosomes. Interacts with DDX3X in an RNA-independent manner. Post-translationally, phosphorylation at Ser-49 and Ser-52 stabilizes the eIF-2/GDP/eIF2B complex and prevents GDP/GTP exchange reaction, thus impairing the recycling of eIF-2 between successive rounds of initiation and leading to global inhibition of translation, while concomitantly initiating the preferential translation of integrated stress response (ISR)-specific mRNAs. Substrate for at least 4 kinases: EIF2AK1/HRI, EIF2AK2/PKR, EIF2AK3/PERK and EIF2AK4/GCN2. Phosphorylation on Ser-52 by the EIF2AK4/GCN2 protein kinase occurs in response to amino acid starvation and UV irradiation. Phosphorylation at Ser-52 by the EIF2AK3/PERK protein kinase occurs in response to the unfolded protein response. Phosphorylation at Ser-52 by EIF2AK1/HRI in response to mitochondrial damage promotes relocalization to the mitochondrial surface.

Its subcellular location is the cytoplasm. The protein localises to the stress granule. It localises to the cytosol. It is found in the mitochondrion. With respect to regulation, activity is regulated by phosphorylation at Ser-49 and Ser-52, which stabilizes the eIF2/GDP/eIF2B complex and prevents the eIF2B-mediated exchange of GDP for GTP, thereby preventing the formation of the 43S pre-initiation complex (43S PIC). This results in the global attenuation of 5' cap-dependent protein synthesis and concomitant translation of ISR-specific mRNAs that contain a short upstream open reading frame (uORF) in their 5' UTR, such as ATF4, ATF5, DDIT3/CHOP and PPP1R15A/GADD34. In terms of biological role, member of the eIF2 complex that functions in the early steps of protein synthesis by forming a ternary complex with GTP and initiator tRNA. This complex binds to a 40S ribosomal subunit, followed by mRNA binding to form a 43S pre-initiation complex. Junction of the 60S ribosomal subunit to form the 80S initiation complex is preceded by hydrolysis of the GTP bound to eIF2 and release of an eIF2-GDP binary complex. In order for eIF2 to recycle and catalyze another round of initiation, the GDP bound to eIF2 must exchange with GTP by way of a reaction catalyzed by eIF2B. EIF2S1/eIF2-alpha is a key component of the integrated stress response (ISR), required for adaptation to various stress: phosphorylation by metabolic-stress sensing protein kinases (EIF2AK1/HRI, EIF2AK2/PKR, EIF2AK3/PERK and EIF2AK4/GCN2) in response to stress converts EIF2S1/eIF2-alpha in a global protein synthesis inhibitor, leading to a attenuation of cap-dependent translation, while concomitantly initiating the preferential translation of ISR-specific mRNAs, such as the transcriptional activators ATF4 and QRICH1, and hence allowing ATF4- and QRICH1-mediated reprogramming. EIF2S1/eIF2-alpha also acts as an activator of mitophagy in response to mitochondrial damage: phosphorylation by EIF2AK1/HRI promotes relocalization to the mitochondrial surface, thereby triggering PRKN-independent mitophagy. The sequence is that of Eukaryotic translation initiation factor 2 subunit 1 (EIF2S1) from Pongo abelii (Sumatran orangutan).